We begin with the raw amino-acid sequence, 400 residues long: Tryptophan synthase beta chain (400 aa).

Residue K91 is modified to N6-(pyridoxal phosphate)lysine.

Belongs to the TrpB family. Tetramer of two alpha and two beta chains. Requires pyridoxal 5'-phosphate as cofactor.

The catalysed reaction is (1S,2R)-1-C-(indol-3-yl)glycerol 3-phosphate + L-serine = D-glyceraldehyde 3-phosphate + L-tryptophan + H2O. Its pathway is amino-acid biosynthesis; L-tryptophan biosynthesis; L-tryptophan from chorismate: step 5/5. The beta subunit is responsible for the synthesis of L-tryptophan from indole and L-serine. In Listeria monocytogenes serotype 4b (strain CLIP80459), this protein is Tryptophan synthase beta chain.